Reading from the N-terminus, the 61-residue chain is Large ribosomal subunit protein bL32 (61 aa).

The segment covering M1 to R16 has biased composition (basic residues). The segment at M1–P39 is disordered. Positions I28–P39 are enriched in basic and acidic residues.

This sequence belongs to the bacterial ribosomal protein bL32 family.

This is Large ribosomal subunit protein bL32 from Rhizobium meliloti (strain 1021) (Ensifer meliloti).